The chain runs to 272 residues: Regulatory protein RecX (272 aa).

Belongs to the RecX family.

Its subcellular location is the cytoplasm. Modulates RecA activity. This Staphylococcus saprophyticus subsp. saprophyticus (strain ATCC 15305 / DSM 20229 / NCIMB 8711 / NCTC 7292 / S-41) protein is Regulatory protein RecX.